Consider the following 1114-residue polypeptide: Mediator of RNA polymerase II transcription subunit 14 (1114 aa).

Disordered regions lie at residues 1-27 (MPGVVMDNANIGGLRHGPGNTYPQDGL), 40-79 (ANAQDGPVHVNGVEKNASQSRSVEAIPSNHASRVTKGPPE), and 120-141 (HGIHPSTAPTTGKSPGNQSPGN). The segment covering 126 to 140 (TAPTTGKSPGNQSPG) has biased composition (polar residues).

The protein belongs to the Mediator complex subunit 14 family. Component of the Mediator complex.

It localises to the nucleus. Component of the Mediator complex, a coactivator involved in the regulated transcription of nearly all RNA polymerase II-dependent genes. Mediator functions as a bridge to convey information from gene-specific regulatory proteins to the basal RNA polymerase II transcription machinery. Mediator is recruited to promoters by direct interactions with regulatory proteins and serves as a scaffold for the assembly of a functional preinitiation complex with RNA polymerase II and the general transcription factors. The protein is Mediator of RNA polymerase II transcription subunit 14 (rgr1) of Aspergillus niger (strain ATCC MYA-4892 / CBS 513.88 / FGSC A1513).